Consider the following 228-residue polypeptide: uncharacterized protein (228 aa).

The disordered stretch occupies residues 90–115; it reads TDESEESSSANNTTTTASHTLSNSKK. Residues 96 to 113 show a composition bias toward low complexity; the sequence is SSSANNTTTTASHTLSNS.

Its subcellular location is the cytoplasm. The protein resides in the cell cortex. Its function is as follows. Deletion results in antifungal drug fluconazole-resistant phenotype. This is an uncharacterized protein from Saccharomyces cerevisiae (strain ATCC 204508 / S288c) (Baker's yeast).